We begin with the raw amino-acid sequence, 225 residues long: UPF0758 protein Ping_0056 (225 aa).

Residues 103-225 (ALTSAAQTKA…CTSFAENGWI (123 aa)) enclose the MPN domain. Positions 174, 176, and 187 each coordinate Zn(2+). The short motif at 174–187 (HNHPSGDPSASEAD) is the JAMM motif element.

It belongs to the UPF0758 family.

The sequence is that of UPF0758 protein Ping_0056 from Psychromonas ingrahamii (strain DSM 17664 / CCUG 51855 / 37).